The sequence spans 207 residues: Urease accessory protein UreE (207 aa).

Residues 171 to 207 (HHGHAHSHSHSHDHDHDHDHDHQHGPGCAHGHGHDHH) are disordered. Residues 180–194 (HSHDHDHDHDHDHQH) are compositionally biased toward basic and acidic residues.

This sequence belongs to the UreE family.

Its subcellular location is the cytoplasm. In terms of biological role, involved in urease metallocenter assembly. Binds nickel. Probably functions as a nickel donor during metallocenter assembly. The protein is Urease accessory protein UreE of Burkholderia lata (strain ATCC 17760 / DSM 23089 / LMG 22485 / NCIMB 9086 / R18194 / 383).